The primary structure comprises 364 residues: MQERHTEQDYRALLIADTPIIDVRAPIEFEQGAMPAAINLPLMNNDERAAVGTCYKQQGSDAALALGHKLVAGEIRQQRMDAWRAACLQNPQGILCCARGGQRSHIVQSWLHAAGIDYPLVEGGYKALRQTAIQATIELAQKPIVLIGGCTGSGKTLLVQQQPNGVDLEGLARHRGSAFGRTLQPQLSQASFENLLAAEMLKTDARQNLRLWVLEDESRMIGSNHLPECLRERMTQAAIAVVEDPFEIRLERLNEEYFLRMHHDFTHAYGDEQGWQEYCEYLHHGLSAIKRRLGLQRYNELAARLDAALTTQLTTGSTDGHLAWLVPLLEEYYDPMYRYQLEKKAEKVVFRGEWAEVAEWVKAR.

The Rhodanese domain maps to 14–137; that stretch reads LIADTPIIDV…LRQTAIQATI (124 aa). Cys-97 (S-selanylcysteine intermediate) is an active-site residue.

This sequence belongs to the SelU family. As to quaternary structure, monomer.

It carries out the reaction 5-methylaminomethyl-2-thiouridine(34) in tRNA + selenophosphate + (2E)-geranyl diphosphate + H2O + H(+) = 5-methylaminomethyl-2-selenouridine(34) in tRNA + (2E)-thiogeraniol + phosphate + diphosphate. The enzyme catalyses 5-methylaminomethyl-2-thiouridine(34) in tRNA + (2E)-geranyl diphosphate = 5-methylaminomethyl-S-(2E)-geranyl-thiouridine(34) in tRNA + diphosphate. The catalysed reaction is 5-methylaminomethyl-S-(2E)-geranyl-thiouridine(34) in tRNA + selenophosphate + H(+) = 5-methylaminomethyl-2-(Se-phospho)selenouridine(34) in tRNA + (2E)-thiogeraniol. It catalyses the reaction 5-methylaminomethyl-2-(Se-phospho)selenouridine(34) in tRNA + H2O = 5-methylaminomethyl-2-selenouridine(34) in tRNA + phosphate. Functionally, involved in the post-transcriptional modification of the uridine at the wobble position (U34) of tRNA(Lys), tRNA(Glu) and tRNA(Gln). Catalyzes the conversion of 2-thiouridine (S2U-RNA) to 2-selenouridine (Se2U-RNA). Acts in a two-step process involving geranylation of 2-thiouridine (S2U) to S-geranyl-2-thiouridine (geS2U) and subsequent selenation of the latter derivative to 2-selenouridine (Se2U) in the tRNA chain. The sequence is that of tRNA 2-selenouridine synthase from Shigella dysenteriae serotype 1 (strain Sd197).